Reading from the N-terminus, the 411-residue chain is Putative metal tolerance protein C3 (411 aa).

Topologically, residues 1–115 are cytoplasmic; it reads MEVNYCPETP…DRAERAAQEL (115 aa). The helical transmembrane segment at 116-136 threads the bilayer; that stretch reads AMQISNWANIFLLALKIYATV. The Vacuolar segment spans residues 137 to 140; it reads KSGS. The helical transmembrane segment at 141–161 threads the bilayer; it reads IAIAASTLDSLLDLMAGGILW. The Cytoplasmic segment spans residues 162–184; sequence FTHLSMKNVNIYKYPIGKLRVQP. Residues 185–205 form a helical membrane-spanning segment; sequence VGIIIFAAVMATLGFQVLLVA. The Vacuolar segment spans residues 206–222; sequence AEQLISNEPSEKMNHVQ. Residues 223–243 traverse the membrane as a helical segment; it reads LIWLYSIMLSATAIKLVLWIY. At 244–262 the chain is on the cytoplasmic side; sequence CKSSRNHIVRAYAKDHHFD. Residues 263-283 form a helical membrane-spanning segment; that stretch reads VVTNVLGLVAAVLANAFYWWL. Residues 284-287 lie on the Vacuolar side of the membrane; that stretch reads DPTG. A helical transmembrane segment spans residues 288–308; the sequence is AILLAIYTIVNWSGTVMENAV. Residues 309 to 390 lie on the Cytoplasmic side of the membrane; it reads SLIGQSAPPE…LPEVERAFVH (82 aa).

It belongs to the cation diffusion facilitator (CDF) transporter (TC 2.A.4) family.

It is found in the vacuole membrane. In terms of biological role, involved in sequestration of excess metal in the cytoplasm into vacuoles to maintain metal homeostasis. This Arabidopsis thaliana (Mouse-ear cress) protein is Putative metal tolerance protein C3 (MTPC3).